Reading from the N-terminus, the 296-residue chain is Probable endonuclease 4 (296 aa).

Positions 68, 109, 144, 178, 181, 213, 226, 228, and 258 each coordinate Zn(2+).

The protein belongs to the AP endonuclease 2 family. It depends on Zn(2+) as a cofactor.

The enzyme catalyses Endonucleolytic cleavage to 5'-phosphooligonucleotide end-products.. Functionally, endonuclease IV plays a role in DNA repair. It cleaves phosphodiester bonds at apurinic or apyrimidinic (AP) sites, generating a 3'-hydroxyl group and a 5'-terminal sugar phosphate. The chain is Probable endonuclease 4 from Pediococcus pentosaceus (strain ATCC 25745 / CCUG 21536 / LMG 10740 / 183-1w).